We begin with the raw amino-acid sequence, 489 residues long: Membrane-bound acylglycerophosphatidylinositol O-acyltransferase frj (489 aa).

Transmembrane regions (helical) follow at residues S2–V22, V40–L60, and L75–F95. Residues N331 and H364 contribute to the active site. 2 helical membrane-spanning segments follow: residues V405–S425 and F433–F453.

This sequence belongs to the membrane-bound acyltransferase family.

It localises to the membrane. The enzyme catalyses a 1-acyl-sn-glycero-3-phospho-(1D-myo-inositol) + (5Z,8Z,11Z,14Z)-eicosatetraenoyl-CoA = a 1-acyl-2-(5Z,8Z,11Z,14Z-eicosatetraenoyl)-sn-glycero-3-phospho-(1D-myo-inositol) + CoA. It catalyses the reaction a 1-acyl-sn-glycero-3-phosphocholine + an acyl-CoA = a 1,2-diacyl-sn-glycero-3-phosphocholine + CoA. The catalysed reaction is (9Z)-hexadecenoyl-CoA + 1-hexadecanoyl-sn-glycero-3-phosphocholine = 1-hexadecanoyl-2-(9Z-hexadecenoyl)-sn-glycero-3-phosphocholine + CoA. It carries out the reaction a 1-acyl-sn-glycero-3-phospho-L-serine + an acyl-CoA = a 1,2-diacyl-sn-glycero-3-phospho-L-serine + CoA. The enzyme catalyses 1-(9Z-octadecenoyl)-sn-glycero-3-phospho-L-serine + (9Z)-hexadecenoyl-CoA = 1-(9Z-octadecenoyl)-2-(9Z-hexadecenoyl)-sn-glycero-3-phospho-L-serine + CoA. It catalyses the reaction a 1-acyl-sn-glycero-3-phosphoethanolamine + an acyl-CoA = a 1,2-diacyl-sn-glycero-3-phosphoethanolamine + CoA. The catalysed reaction is 1-hexadecanoyl-sn-glycero-3-phosphoethanolamine + (9Z)-hexadecenoyl-CoA = 1-hexadecanoyl-2-(9Z)-hexadecenoyl-sn-glycero-3-phosphoethanolamine + CoA. The protein operates within lipid metabolism; phospholipid metabolism. In terms of biological role, acyltransferase that mediates the acylation of lysophospholipids to produce phospholipids (glycerophospholipids). Highest activity with lysophosphatidylinositol (1-acyl-sn-glycero-3-phospho-(1D-myo-inositol) or LPI) producing phosphatidylinositol (1,2-diacyl-sn-glycero-3-phospho-(1D-myo-inositol) or PI) (LPIAT activity), but also converts lysophosphatidylcholine (1-acyl-sn-glycero-3-phosphocholine or LPC) to phosphatidylcholine (1,2-diacyl-sn-glycero-3-phosphocholine or PC) (LPCAT activity), lysophosphatidylserine (1-acyl-2-hydroxy-sn-glycero-3-phospho-L-serine or LPS) to phosphatidylserine (1,2-diacyl-sn-glycero-3-phospho-L-serine or PS) (LPSAT activity), and lysophosphatidylethanolamine (1-acyl-sn-glycero-3-phosphoethanolamine or LPE) producing phosphatidylethanolamine (1,2-diacyl-sn-glycero-3-phosphoethanolamine or PE) (LPEAT activity). Has a preference for unsaturated fatty acid arachidonoyl-CoA ((5Z,8Z,11Z,14Z)-eicosatetraenoyl-CoA). Glycerophospholipids are important structural and functional components of cellular membrane, acyl-chain remodeling regulates the molecular species distribution of glycerophospholipids which can affect membrane fluidity and curvature. The polypeptide is Membrane-bound acylglycerophosphatidylinositol O-acyltransferase frj (Drosophila melanogaster (Fruit fly)).